The following is a 345-amino-acid chain: Major capsid protein (345 aa).

Intercapsomeric interactions stretches follow at residues Gly-11–Leu-25 and Tyr-152–Ile-156.

Belongs to the T7virus major capsid protein family. Homohexamer. Interacts with the connector protein and the minor capsid protein. Interacts with the capsid assembly scaffolding protein; capsid proteins and scaffolding proteins form building blocks that assemble to form the procapsid, each hexamer of the major capsid protein interacting with 2 scaffolding proteins.

It is found in the virion. Assembles with the minor capsid protein to form an icosahedral capsid with a T=7 symmetry, about 60 nm in diameter, and consisting of 415 capsid proteins. The major and minor capsid proteins are incorporated into the capsid in about a 90/10 ratio respectively. Once the capsid is formed, encapsidates one single copy of the viral genome. The polypeptide is Major capsid protein (Escherichia coli (Bacteriophage T7)).